The primary structure comprises 327 residues: Gamma-resorcylate decarboxylase (327 aa).

Zn(2+)-binding residues include glutamate 8, histidine 10, histidine 164, and aspartate 287. Aspartate 287 is a catalytic residue.

This sequence belongs to the metallo-dependent hydrolases superfamily. ACMSD family. As to quaternary structure, homotetramer. It depends on Zn(2+) as a cofactor.

It catalyses the reaction 2,6-dihydroxybenzoate + H(+) = resorcinol + CO2. The enzyme catalyses 2,3-dihydroxybenzoate + H(+) = catechol + CO2. The protein operates within aromatic compound metabolism. Its activity is regulated as follows. Insensitive to oxygen. Decarboxylation and carboxylation are inhibited by AgNO(3) and by diethyl pyrocarbonate, a histidine residue-specific inhibitor. Decarboxylation is also inhibited by HgCl(2) and activated by MgCl(2). Functionally, involved in the gamma-resorcylate (2,6-dihydroxybenzoate) catabolism. Catalyzes the reversible decarboxylation of gamma-resorcylate to resorcinol. Also catalyzes the decarboxylation of 2,3-dihydroxybenzoate to catechol, but does not act on 2-hydroxybenzoic acid 3-hydroxybenzoic acid, 4-hydroxybenzoic acid, 3,4-dihydroxybenzoic acid, 2,5-dihydroxybenzoic acid, 2,3,4-trihydroxybenzoic acid, 3,4,5-trihydroxybenzoic acid, 4-aminobenzoic acid, o-hydroxyphenylacetic acid and vanillic acid. Resorcinol and catechol can both be carboxylated by the reverse reaction. The protein is Gamma-resorcylate decarboxylase of Rhizobium radiobacter (Agrobacterium tumefaciens).